Reading from the N-terminus, the 83-residue chain is Cytochrome b559 subunit alpha (83 aa).

Residues Val21–Trp35 traverse the membrane as a helical segment. Heme is bound at residue His23.

The protein belongs to the PsbE/PsbF family. As to quaternary structure, heterodimer of an alpha subunit and a beta subunit. PSII is composed of 1 copy each of membrane proteins PsbA, PsbB, PsbC, PsbD, PsbE, PsbF, PsbH, PsbI, PsbJ, PsbK, PsbL, PsbM, PsbT, PsbX, PsbY, PsbZ, Psb30/Ycf12, at least 3 peripheral proteins of the oxygen-evolving complex and a large number of cofactors. It forms dimeric complexes. Heme b is required as a cofactor.

The protein resides in the plastid. Its subcellular location is the chloroplast thylakoid membrane. In terms of biological role, this b-type cytochrome is tightly associated with the reaction center of photosystem II (PSII). PSII is a light-driven water:plastoquinone oxidoreductase that uses light energy to abstract electrons from H(2)O, generating O(2) and a proton gradient subsequently used for ATP formation. It consists of a core antenna complex that captures photons, and an electron transfer chain that converts photonic excitation into a charge separation. The protein is Cytochrome b559 subunit alpha of Pinus koraiensis (Korean pine).